A 99-amino-acid polypeptide reads, in one-letter code: A-type ATP synthase subunit F (99 aa).

The protein belongs to the V-ATPase F subunit family. Has multiple subunits with at least A(3), B(3), C, D, E, F, H, I and proteolipid K(x).

The protein resides in the cell membrane. In terms of biological role, component of the A-type ATP synthase that produces ATP from ADP in the presence of a proton gradient across the membrane. This is A-type ATP synthase subunit F from Methanothrix thermoacetophila (strain DSM 6194 / JCM 14653 / NBRC 101360 / PT) (Methanosaeta thermophila).